Reading from the N-terminus, the 79-residue chain is Sec-independent protein translocase protein TatA (79 aa).

A helical membrane pass occupies residues 1–21 (MGSLSIWHWIVVIAVVLLLFG). A compositionally biased stretch (basic and acidic residues) spans 43 to 60 (LQDDEKTAEKPDPVKSID). The segment at 43 to 79 (LQDDEKTAEKPDPVKSIDHNAPTAAAPTRTDVGSKAV) is disordered.

Belongs to the TatA/E family. In terms of assembly, the Tat system comprises two distinct complexes: a TatABC complex, containing multiple copies of TatA, TatB and TatC subunits, and a separate TatA complex, containing only TatA subunits. Substrates initially bind to the TatABC complex, which probably triggers association of the separate TatA complex to form the active translocon.

Its subcellular location is the cell inner membrane. In terms of biological role, part of the twin-arginine translocation (Tat) system that transports large folded proteins containing a characteristic twin-arginine motif in their signal peptide across membranes. TatA could form the protein-conducting channel of the Tat system. The protein is Sec-independent protein translocase protein TatA of Rhodopseudomonas palustris (strain BisB5).